The sequence spans 234 residues: Adenosine 5'-phosphosulfate reductase (234 aa).

[4Fe-4S] cluster contacts are provided by Cys-120, Cys-121, Cys-203, and Cys-206. The active-site Nucleophile; cysteine thiosulfonate intermediate is Cys-229.

Belongs to the PAPS reductase family. CysH subfamily. The cofactor is [4Fe-4S] cluster.

The protein resides in the cytoplasm. It carries out the reaction [thioredoxin]-disulfide + sulfite + AMP + 2 H(+) = adenosine 5'-phosphosulfate + [thioredoxin]-dithiol. It participates in sulfur metabolism; hydrogen sulfide biosynthesis; sulfite from sulfate. Catalyzes the formation of sulfite from adenosine 5'-phosphosulfate (APS) using thioredoxin as an electron donor. This is Adenosine 5'-phosphosulfate reductase from Bacillus cereus (strain AH187).